A 526-amino-acid polypeptide reads, in one-letter code: Arginine/ornithine antiporter ArcD1 (526 aa).

Transmembrane regions (helical) follow at residues 8–28 (GIGLAALVAIIVSGAIGGGVF), 41–61 (GGVVISWIVIGFGILMLVLSL), 88–108 (FISGWGYWLSAWAGNIAFAVL), 128–148 (LTILSVIVVSIVSWGLTLLVM), 160–180 (IVLVAKLIPLFVFVIAGIVTF), 220–240 (VKGSLMVMIWVFVGIEGAAMM), 255–275 (IFGLIALLVIYILLSLLPFGF), 297–317 (VGGWGGSLMAIGLVISLLGAW), 354–374 (LLLTQLIVQIFLIVTYFVADA), 378–398 (FVYLCTAVIMICYALVGLYLF), 407–427 (TSNIIIGFIAAAFQILALYYS), 428–448 (GWQFVWLSLILYAVGFILYAL), 466–486 (FILTVLGILAVFGVYGNWLGL), and 495–515 (NTLLVAVVPLIVVTFIVYFVV).

The protein belongs to the amino acid-polyamine-organocation (APC) superfamily. Basic amino acid/polyamine antiporter (APA) (TC 2.A.3.2) family.

It is found in the cell membrane. The catalysed reaction is L-ornithine(in) + L-arginine(out) = L-ornithine(out) + L-arginine(in). In terms of biological role, catalyzes electroneutral exchange between L-arginine and L-ornithine. Can also efficiently translocate L-histidine and L-lysine. ArcD1 is the main L-arginine/L-ornithine exchanger in the arginine deiminase (ADI) pathway. This is Arginine/ornithine antiporter ArcD1 from Lactococcus lactis subsp. cremoris (strain MG1363).